The sequence spans 341 residues: tRNA N6-adenosine threonylcarbamoyltransferase (341 aa).

Histidine 111 and histidine 115 together coordinate Fe cation. Substrate-binding positions include 134–138 (LVSGG), aspartate 167, glycine 180, and asparagine 276. A Fe cation-binding site is contributed by aspartate 304.

The protein belongs to the KAE1 / TsaD family. Fe(2+) serves as cofactor.

Its subcellular location is the cytoplasm. The catalysed reaction is L-threonylcarbamoyladenylate + adenosine(37) in tRNA = N(6)-L-threonylcarbamoyladenosine(37) in tRNA + AMP + H(+). In terms of biological role, required for the formation of a threonylcarbamoyl group on adenosine at position 37 (t(6)A37) in tRNAs that read codons beginning with adenine. Is involved in the transfer of the threonylcarbamoyl moiety of threonylcarbamoyl-AMP (TC-AMP) to the N6 group of A37, together with TsaE and TsaB. TsaD likely plays a direct catalytic role in this reaction. The polypeptide is tRNA N6-adenosine threonylcarbamoyltransferase (Pseudomonas aeruginosa (strain ATCC 15692 / DSM 22644 / CIP 104116 / JCM 14847 / LMG 12228 / 1C / PRS 101 / PAO1)).